The chain runs to 333 residues: Probable tRNA pseudouridine synthase B (333 aa).

Over residues 1-14 the composition is skewed to basic and acidic residues; that stretch reads MKCPSREVFSKFEE. Residues 1–27 form a disordered region; that stretch reads MKCPSREVFSKFEESTNPQWGKPPSQR. Asp-71 acts as the Nucleophile in catalysis. Residues 238–313 enclose the PUA domain; that stretch reads LPKIWVRDSA…LVARTDRVVM (76 aa).

Belongs to the pseudouridine synthase TruB family. Type 2 subfamily.

It carries out the reaction uridine(55) in tRNA = pseudouridine(55) in tRNA. In terms of biological role, could be responsible for synthesis of pseudouridine from uracil-55 in the psi GC loop of transfer RNAs. In Pyrobaculum aerophilum (strain ATCC 51768 / DSM 7523 / JCM 9630 / CIP 104966 / NBRC 100827 / IM2), this protein is Probable tRNA pseudouridine synthase B.